We begin with the raw amino-acid sequence, 211 residues long: Large ribosomal subunit protein uL4 (211 aa).

The tract at residues 41–87 is disordered; sequence QAHARQGTASTLTRSEVRGGGRKPYKQKGTGRARQGSIRTPLRPGGG. The span at 60–71 shows a compositional bias: basic residues; that stretch reads GGRKPYKQKGTG.

It belongs to the universal ribosomal protein uL4 family. Part of the 50S ribosomal subunit.

Its function is as follows. One of the primary rRNA binding proteins, this protein initially binds near the 5'-end of the 23S rRNA. It is important during the early stages of 50S assembly. It makes multiple contacts with different domains of the 23S rRNA in the assembled 50S subunit and ribosome. Functionally, forms part of the polypeptide exit tunnel. This chain is Large ribosomal subunit protein uL4, found in Parasynechococcus marenigrum (strain WH8102).